The chain runs to 270 residues: 4-hydroxy-tetrahydrodipicolinate reductase (270 aa).

NAD(+)-binding positions include 11 to 16 (GAGGRM) and Glu-37. NADP(+) is bound at residue Arg-38. NAD(+)-binding positions include 101-103 (GTT) and 125-128 (APNM). Catalysis depends on His-158, which acts as the Proton donor/acceptor. His-159 is a binding site for (S)-2,3,4,5-tetrahydrodipicolinate. Residue Lys-162 is the Proton donor of the active site. Position 168-169 (168-169 (GT)) interacts with (S)-2,3,4,5-tetrahydrodipicolinate.

This sequence belongs to the DapB family.

The protein localises to the cytoplasm. The enzyme catalyses (S)-2,3,4,5-tetrahydrodipicolinate + NAD(+) + H2O = (2S,4S)-4-hydroxy-2,3,4,5-tetrahydrodipicolinate + NADH + H(+). It catalyses the reaction (S)-2,3,4,5-tetrahydrodipicolinate + NADP(+) + H2O = (2S,4S)-4-hydroxy-2,3,4,5-tetrahydrodipicolinate + NADPH + H(+). It functions in the pathway amino-acid biosynthesis; L-lysine biosynthesis via DAP pathway; (S)-tetrahydrodipicolinate from L-aspartate: step 4/4. Catalyzes the conversion of 4-hydroxy-tetrahydrodipicolinate (HTPA) to tetrahydrodipicolinate. The polypeptide is 4-hydroxy-tetrahydrodipicolinate reductase (Shewanella oneidensis (strain ATCC 700550 / JCM 31522 / CIP 106686 / LMG 19005 / NCIMB 14063 / MR-1)).